The primary structure comprises 347 residues: Ryncolin-2 (347 aa).

An N-terminal signal peptide occupies residues 1 to 19 (MKPWAAFHLIFLVASSLEG). The interval 49 to 115 (LQSQPGIPGI…DKGDKGDKGD (67 aa)) is disordered. Residues 57–114 (GIPGVPGINGSEGLKGDPGPQGLPGETGFDGIPGVAGPKGDKGDQGDKGDKGDKGDKG) enclose the Collagen-like domain. The span at 95-115 (KGDKGDQGDKGDKGDKGDKGD) shows a compositional bias: basic and acidic residues. The region spanning 121-341 (DCPPTDVEVR…YADMKIRPQQ (221 aa)) is the Fibrinogen C-terminal domain. Disulfide bonds link Cys-132-Cys-160 and Cys-284-Cys-297.

Belongs to the ficolin lectin family. Veficolin subfamily. In terms of processing, hydroxylated, possibly at Pro-74 and Pro-94. Expressed by the venom duct.

Its subcellular location is the secreted. Functionally, initiates complement activation and/or interferes in platelet aggregation and/or blood coagulation. This is Ryncolin-2 from Cerberus rynchops (Dog-faced water snake).